The following is a 217-amino-acid chain: Trimethylamine corrinoid protein (217 aa).

The region spanning 1-92 (MANKEEIIAK…EMEKRKSQTK (92 aa)) is the B12-binding N-terminal domain. In terms of domain architecture, B12-binding spans 94–217 (LGTVAIGTIE…VAKVKAALNV (124 aa)). Histidine 107 lines the methylcob(III)alamin pocket.

It belongs to the methylamine corrinoid protein family. As to quaternary structure, can form a complex with MttB.

The protein operates within one-carbon metabolism; methanogenesis from trimethylamine. Its function is as follows. Acts probably as a methyl group carrier between MttB and either MtbA or MtaA. The polypeptide is Trimethylamine corrinoid protein (Methanosarcina barkeri).